The following is a 687-amino-acid chain: Translation initiation factor IF-2 (687 aa).

In terms of domain architecture, tr-type G spans 186 to 355; sequence KRPPIVTVMG…LLTAEMLELK (170 aa). The interval 195–202 is G1; the sequence is GHVDHGKT. Residue 195–202 coordinates GTP; sequence GHVDHGKT. Positions 220–224 are G2; the sequence is GITQH. Residues 241 to 244 are G3; that stretch reads DTPG. GTP contacts are provided by residues 241-245 and 295-298; these read DTPGH and NKID. The segment at 295 to 298 is G4; sequence NKID. The interval 331–333 is G5; the sequence is SAK.

Belongs to the TRAFAC class translation factor GTPase superfamily. Classic translation factor GTPase family. IF-2 subfamily.

The protein localises to the cytoplasm. One of the essential components for the initiation of protein synthesis. Protects formylmethionyl-tRNA from spontaneous hydrolysis and promotes its binding to the 30S ribosomal subunits. Also involved in the hydrolysis of GTP during the formation of the 70S ribosomal complex. In Clostridium botulinum (strain Alaska E43 / Type E3), this protein is Translation initiation factor IF-2.